Here is a 245-residue protein sequence, read N- to C-terminus: 1-(5-phosphoribosyl)-5-[(5-phosphoribosylamino)methylideneamino] imidazole-4-carboxamide isomerase (245 aa).

The active-site Proton acceptor is aspartate 7. The active-site Proton donor is the aspartate 129.

Belongs to the HisA/HisF family.

Its subcellular location is the cytoplasm. The catalysed reaction is 1-(5-phospho-beta-D-ribosyl)-5-[(5-phospho-beta-D-ribosylamino)methylideneamino]imidazole-4-carboxamide = 5-[(5-phospho-1-deoxy-D-ribulos-1-ylimino)methylamino]-1-(5-phospho-beta-D-ribosyl)imidazole-4-carboxamide. It participates in amino-acid biosynthesis; L-histidine biosynthesis; L-histidine from 5-phospho-alpha-D-ribose 1-diphosphate: step 4/9. This chain is 1-(5-phosphoribosyl)-5-[(5-phosphoribosylamino)methylideneamino] imidazole-4-carboxamide isomerase, found in Salmonella choleraesuis (strain SC-B67).